The chain runs to 551 residues: DNA double-strand break repair helicase HerA (551 aa).

Residues Arg152, 161–166 (GAGKSN), and 507–508 (RI) each bind ATP.

Belongs to the HerA family. In terms of assembly, homohexamer. Interacts with NurA.

It catalyses the reaction Couples ATP hydrolysis with the unwinding of duplex DNA at the replication fork by translocating in the 5'-3' direction. This creates two antiparallel DNA single strands (ssDNA). The leading ssDNA polymer is the template for DNA polymerase III holoenzyme which synthesizes a continuous strand.. The catalysed reaction is ATP + H2O = ADP + phosphate + H(+). The enzyme catalyses Couples ATP hydrolysis with the unwinding of duplex DNA by translocating in the 3'-5' direction.. Its activity is regulated as follows. Helicase activity is stimulated in the presence of NurA. Involved in DNA double-strand break (DSB) repair. Probably acts with NurA to stimulate resection of the 5' strand and produce the long 3' single-strand that is required for RadA loading. Has DNA-dependent ATPase activity and DNA helicase activity. The protein is DNA double-strand break repair helicase HerA of Pyrococcus furiosus (strain ATCC 43587 / DSM 3638 / JCM 8422 / Vc1).